Consider the following 584-residue polypeptide: BEL1-like homeodomain protein 8 (584 aa).

Residues Ser-266–Ser-282 are SR/KY domain. The interval Glu-292–Glu-317 is disordered. Residues Ser-295–Asn-305 are compositionally biased toward acidic residues. The interval Leu-316 to Val-387 is BELL domain. Residues Ile-424–Met-486 constitute a DNA-binding region (homeobox). Residues Thr-503–Ser-529 are disordered.

It belongs to the TALE/BELL homeobox family. In terms of assembly, may form heterodimeric complex with the TALE/KNOX proteins STM and KNAT1/BP.

It localises to the nucleus. Its function is as follows. Required for specifying floral primordia and establishing early internode patterning events during inflorescence development. The chain is BEL1-like homeodomain protein 8 (BLH8) from Arabidopsis thaliana (Mouse-ear cress).